We begin with the raw amino-acid sequence, 422 residues long: L-2-hydroxyglutarate dehydrogenase (422 aa).

The protein belongs to the L2HGDH family. Requires FAD as cofactor.

The protein localises to the cell inner membrane. It carries out the reaction (S)-2-hydroxyglutarate + a quinone = a quinol + 2-oxoglutarate. The protein operates within amino-acid degradation. Functionally, catalyzes the dehydrogenation of L-2-hydroxyglutarate (L2HG) to alpha-ketoglutarate and couples to the respiratory chain by feeding electrons from the reaction into the membrane quinone pool. Functions in a L-lysine degradation pathway that proceeds via cadaverine, glutarate and L-2-hydroxyglutarate. Also displays some oxidase activity in vitro on L-2-hydroxyglutarate with O2 as the electron acceptor, but this activity is most likely not physiological. This chain is L-2-hydroxyglutarate dehydrogenase, found in Escherichia coli O17:K52:H18 (strain UMN026 / ExPEC).